The sequence spans 43 residues: Metallothionein A (43 aa).

The segment at 1-16 (SCAGSCKCKNCRCRSC) is beta. Positions 2, 6, 8, 11, 13, 16, 20, 21, 23, 24, 28, 31, 35, and 37 each coordinate a divalent metal cation. Residues 17–43 (RKSCCSCCPAGCNNCAKGCVCKEPASS) form an alpha region.

Belongs to the metallothionein superfamily. Type 1 family.

Functionally, metallothioneins have a high content of cysteine residues that bind various heavy metals. The polypeptide is Metallothionein A (Colinus virginianus (Northern bobwhite)).